A 507-amino-acid polypeptide reads, in one-letter code: Cysteine--tRNA ligase (507 aa).

Residue C29 coordinates Zn(2+). Positions 31–41 (PTVYDVPHIGN) match the 'HIGH' region motif. The Zn(2+) site is built by C207, H232, and E236. A 'KMSKS' region motif is present at residues 265–269 (KMSKS). Position 268 (K268) interacts with ATP.

Belongs to the class-I aminoacyl-tRNA synthetase family. As to quaternary structure, monomer. It depends on Zn(2+) as a cofactor.

It is found in the cytoplasm. It catalyses the reaction tRNA(Cys) + L-cysteine + ATP = L-cysteinyl-tRNA(Cys) + AMP + diphosphate. The sequence is that of Cysteine--tRNA ligase from Neorickettsia sennetsu (strain ATCC VR-367 / Miyayama) (Ehrlichia sennetsu).